The sequence spans 492 residues: Probable cytosol aminopeptidase (492 aa).

Residues Lys-262 and Asp-267 each coordinate Mn(2+). Residue Lys-274 is part of the active site. Asp-286, Asp-345, and Glu-347 together coordinate Mn(2+). Arg-349 is an active-site residue.

This sequence belongs to the peptidase M17 family. Mn(2+) is required as a cofactor.

It is found in the cytoplasm. It catalyses the reaction Release of an N-terminal amino acid, Xaa-|-Yaa-, in which Xaa is preferably Leu, but may be other amino acids including Pro although not Arg or Lys, and Yaa may be Pro. Amino acid amides and methyl esters are also readily hydrolyzed, but rates on arylamides are exceedingly low.. It carries out the reaction Release of an N-terminal amino acid, preferentially leucine, but not glutamic or aspartic acids.. Its function is as follows. Presumably involved in the processing and regular turnover of intracellular proteins. Catalyzes the removal of unsubstituted N-terminal amino acids from various peptides. This is Probable cytosol aminopeptidase from Acaryochloris marina (strain MBIC 11017).